A 615-amino-acid chain; its full sequence is Medium-chain acyl-CoA ligase ACSF2, mitochondrial (615 aa).

The transit peptide at 1–41 directs the protein to the mitochondrion; that stretch reads MAVYVGMLRLGRLCAGSSGVLGARAALSRSWQEARLQGVRF. The residue at position 179 (Lys179) is an N6-acetyllysine. N6-acetyllysine; alternate is present on Lys182. Lys182 is subject to N6-succinyllysine; alternate. 263–271 contacts ATP; that stretch reads TSGTTGSPK. N6-acetyllysine occurs at positions 340 and 398. Lys478 bears the N6-succinyllysine mark. ATP-binding residues include Asp493 and Arg508. The residue at position 510 (Lys510) is an N6-acetyllysine. N6-acetyllysine; alternate is present on residues Lys544 and Lys570. N6-succinyllysine; alternate occurs at positions 544 and 570. Lys599 provides a ligand contact to ATP. Position 599 is an N6-succinyllysine (Lys599).

Belongs to the ATP-dependent AMP-binding enzyme family.

The protein localises to the mitochondrion. The catalysed reaction is a medium-chain fatty acid + ATP + CoA = a medium-chain fatty acyl-CoA + AMP + diphosphate. The enzyme catalyses octanoate + ATP + CoA = octanoyl-CoA + AMP + diphosphate. Acyl-CoA synthases catalyze the initial reaction in fatty acid metabolism, by forming a thioester with CoA. Has some preference toward medium-chain substrates. Plays a role in adipocyte differentiation. This Homo sapiens (Human) protein is Medium-chain acyl-CoA ligase ACSF2, mitochondrial.